Consider the following 476-residue polypeptide: Glycogen synthase (476 aa).

K15 provides a ligand contact to ADP-alpha-D-glucose.

Belongs to the glycosyltransferase 1 family. Bacterial/plant glycogen synthase subfamily.

It catalyses the reaction [(1-&gt;4)-alpha-D-glucosyl](n) + ADP-alpha-D-glucose = [(1-&gt;4)-alpha-D-glucosyl](n+1) + ADP + H(+). It functions in the pathway glycan biosynthesis; glycogen biosynthesis. Functionally, synthesizes alpha-1,4-glucan chains using ADP-glucose. The polypeptide is Glycogen synthase (Bacillus cereus (strain ATCC 14579 / DSM 31 / CCUG 7414 / JCM 2152 / NBRC 15305 / NCIMB 9373 / NCTC 2599 / NRRL B-3711)).